A 254-amino-acid chain; its full sequence is 3-deoxy-manno-octulosonate cytidylyltransferase (254 aa).

The protein belongs to the KdsB family.

The protein localises to the cytoplasm. It catalyses the reaction 3-deoxy-alpha-D-manno-oct-2-ulosonate + CTP = CMP-3-deoxy-beta-D-manno-octulosonate + diphosphate. It functions in the pathway nucleotide-sugar biosynthesis; CMP-3-deoxy-D-manno-octulosonate biosynthesis; CMP-3-deoxy-D-manno-octulosonate from 3-deoxy-D-manno-octulosonate and CTP: step 1/1. It participates in bacterial outer membrane biogenesis; lipopolysaccharide biosynthesis. In terms of biological role, activates KDO (a required 8-carbon sugar) for incorporation into bacterial lipopolysaccharide in Gram-negative bacteria. This chain is 3-deoxy-manno-octulosonate cytidylyltransferase, found in Pseudomonas aeruginosa (strain LESB58).